Here is a 245-residue protein sequence, read N- to C-terminus: 5-oxoprolinase subunit A (245 aa).

It belongs to the LamB/PxpA family. As to quaternary structure, forms a complex composed of PxpA, PxpB and PxpC.

It catalyses the reaction 5-oxo-L-proline + ATP + 2 H2O = L-glutamate + ADP + phosphate + H(+). In terms of biological role, catalyzes the cleavage of 5-oxoproline to form L-glutamate coupled to the hydrolysis of ATP to ADP and inorganic phosphate. The protein is 5-oxoprolinase subunit A of Serratia proteamaculans (strain 568).